The sequence spans 292 residues: Ribosomal RNA small subunit methyltransferase A (292 aa).

S-adenosyl-L-methionine is bound by residues Asn-28, Leu-30, Gly-55, Glu-77, Asp-103, and Asn-123.

This sequence belongs to the class I-like SAM-binding methyltransferase superfamily. rRNA adenine N(6)-methyltransferase family. RsmA subfamily.

Its subcellular location is the cytoplasm. It catalyses the reaction adenosine(1518)/adenosine(1519) in 16S rRNA + 4 S-adenosyl-L-methionine = N(6)-dimethyladenosine(1518)/N(6)-dimethyladenosine(1519) in 16S rRNA + 4 S-adenosyl-L-homocysteine + 4 H(+). Functionally, specifically dimethylates two adjacent adenosines (A1518 and A1519) in the loop of a conserved hairpin near the 3'-end of 16S rRNA in the 30S particle. May play a critical role in biogenesis of 30S subunits. In Methylobacterium radiotolerans (strain ATCC 27329 / DSM 1819 / JCM 2831 / NBRC 15690 / NCIMB 10815 / 0-1), this protein is Ribosomal RNA small subunit methyltransferase A.